The sequence spans 200 residues: Type 1 fimbriae regulatory protein FimB (200 aa).

The Tyr recombinase domain occupies Lys8 to Asp189. Residues Arg47, Lys72, His141, Arg144, and His167 contribute to the active site. The O-(3'-phospho-DNA)-tyrosine intermediate role is filled by Tyr176.

Belongs to the 'phage' integrase family.

Its function is as follows. FimB is one of the 2 regulatory proteins which control the phase variation of type 1 fimbriae in E.coli. These proteins mediate the periodic inversion of a 300bp DNA segment that harbors the promoter for the fimbrial structural gene, fimA. FimB switches fimA on. This chain is Type 1 fimbriae regulatory protein FimB (fimB), found in Escherichia coli O157:H7.